Here is a 124-residue protein sequence, read N- to C-terminus: Putative membrane protein insertion efficiency factor (124 aa).

This sequence belongs to the UPF0161 family.

The protein resides in the cell inner membrane. Functionally, could be involved in insertion of integral membrane proteins into the membrane. The protein is Putative membrane protein insertion efficiency factor of Psychrobacter cryohalolentis (strain ATCC BAA-1226 / DSM 17306 / VKM B-2378 / K5).